A 414-amino-acid chain; its full sequence is D-mannose isomerase (414 aa).

Catalysis depends on proton donor/acceptor residues His255 and His390.

Belongs to the N-acylglucosamine 2-epimerase family. In terms of assembly, monomer.

It carries out the reaction D-mannose = D-fructose. Strongly inhibited by Ag(2+), Cu(2+) and cetyltrimethyl ammonium bromide (CTAB). Catalyzes the reversible isomerization of D-mannose to D-fructose. Shows high specific activity towards mannose and fructose, and has no detectable activity towards other monosaccharides and disaccharides. In Pseudomonas cannabina pv. alisalensis, this protein is D-mannose isomerase.